A 725-amino-acid polypeptide reads, in one-letter code: Phosphoribosylformylglycinamidine synthase subunit PurL (725 aa).

The active site involves histidine 34. Tyrosine 37 serves as a coordination point for ATP. Residue glutamate 93 participates in Mg(2+) binding. Substrate-binding positions include 94–97 (SHNH) and arginine 116. Histidine 95 functions as the Proton acceptor in the catalytic mechanism. Residue aspartate 117 participates in Mg(2+) binding. Residues 220-241 (GASFASEDLSEDAETEDRPAVQ) are disordered. Substrate is bound at residue glutamine 241. Residue aspartate 269 participates in Mg(2+) binding. A substrate-binding site is contributed by 313–315 (ESQ). ATP is bound by residues aspartate 489 and glycine 526. Asparagine 527 provides a ligand contact to Mg(2+). Serine 529 serves as a coordination point for substrate.

This sequence belongs to the FGAMS family. In terms of assembly, monomer. Part of the FGAM synthase complex composed of 1 PurL, 1 PurQ and 2 PurS subunits.

It is found in the cytoplasm. The catalysed reaction is N(2)-formyl-N(1)-(5-phospho-beta-D-ribosyl)glycinamide + L-glutamine + ATP + H2O = 2-formamido-N(1)-(5-O-phospho-beta-D-ribosyl)acetamidine + L-glutamate + ADP + phosphate + H(+). The protein operates within purine metabolism; IMP biosynthesis via de novo pathway; 5-amino-1-(5-phospho-D-ribosyl)imidazole from N(2)-formyl-N(1)-(5-phospho-D-ribosyl)glycinamide: step 1/2. In terms of biological role, part of the phosphoribosylformylglycinamidine synthase complex involved in the purines biosynthetic pathway. Catalyzes the ATP-dependent conversion of formylglycinamide ribonucleotide (FGAR) and glutamine to yield formylglycinamidine ribonucleotide (FGAM) and glutamate. The FGAM synthase complex is composed of three subunits. PurQ produces an ammonia molecule by converting glutamine to glutamate. PurL transfers the ammonia molecule to FGAR to form FGAM in an ATP-dependent manner. PurS interacts with PurQ and PurL and is thought to assist in the transfer of the ammonia molecule from PurQ to PurL. This Haloquadratum walsbyi (strain DSM 16790 / HBSQ001) protein is Phosphoribosylformylglycinamidine synthase subunit PurL.